A 242-amino-acid polypeptide reads, in one-letter code: Anamorsin homolog (242 aa).

The N-terminal SAM-like domain stretch occupies residues 1 to 140; it reads MMNFADTLVI…NVTAENPDFL (140 aa). The tract at residues 141–162 is linker; that stretch reads SNEDDDEGNSSDGEAYQNAEDN. [4Fe-4S] cluster is bound by residues C205, C208, C216, and C219. 2 short sequence motifs (cx2C motif) span residues 205–208 and 216–219; these read CGNC and CASC. The fe-S binding site B stretch occupies residues 205–219; it reads CGNCYLGDAFRCASC.

It belongs to the anamorsin family. In terms of assembly, monomer. It depends on [4Fe-4S] cluster as a cofactor.

The protein resides in the cytoplasm. The protein localises to the mitochondrion intermembrane space. In terms of biological role, component of the cytosolic iron-sulfur (Fe-S) protein assembly (CIA) machinery. Required for the maturation of extramitochondrial Fe-S proteins. Part of an electron transfer chain functioning in an early step of cytosolic Fe-S biogenesis, facilitating the de novo assembly of a [4Fe-4S] cluster on the cytosolic Fe-S scaffold complex. Electrons are transferred from NADPH via a FAD- and FMN-containing diflavin oxidoreductase. Together with the diflavin oxidoreductase, also required for the assembly of the diferric tyrosyl radical cofactor of ribonucleotide reductase (RNR), probably by providing electrons for reduction during radical cofactor maturation in the catalytic small subunit. This is Anamorsin homolog from Plasmodium knowlesi (strain H).